We begin with the raw amino-acid sequence, 223 residues long: Adenylate kinase (223 aa).

Residue 10–15 participates in ATP binding; it reads GSGKGT. Positions 30–59 are NMP; that stretch reads ESGAIFRQHIGGGTELGKKAKEYIDRGDLV. AMP-binding positions include serine 31, arginine 36, 57–59, 84–87, and glutamine 91; these read DLV and GFPR. The tract at residues 125-164 is LID; it reads GRRLCKNDNNHPNNIFIDAIKPDGDVCRVCGGSLSARADD. Arginine 126 is a binding site for ATP. Positions 161 and 173 each coordinate AMP. Glycine 209 serves as a coordination point for ATP.

This sequence belongs to the adenylate kinase family. Monomer.

It localises to the cytoplasm. The catalysed reaction is AMP + ATP = 2 ADP. It participates in purine metabolism; AMP biosynthesis via salvage pathway; AMP from ADP: step 1/1. Its function is as follows. Catalyzes the reversible transfer of the terminal phosphate group between ATP and AMP. Plays an important role in cellular energy homeostasis and in adenine nucleotide metabolism. This is Adenylate kinase from Nitratidesulfovibrio vulgaris (strain DSM 19637 / Miyazaki F) (Desulfovibrio vulgaris).